The chain runs to 254 residues: MKLVIVKDYAELSRKAAEMLVSEVKANPKTVLGLATGGTPVGMYRELIKLSQAQSIDYSQASSFNLDEYVGLSSTHPQSYRSYMEENLFNHINIPAEKTHVPVGNTTDHLAECARYEEAIRLAGGIDIQVLGIGNNGHIGFNEPGSPADSLTRVVQLTDSTIEANARYFDSVEQVPTQAVSMGIKTILGAKKVVLLASGEAKAEAVRLMLEEEPTADVPASLLQLHRDVTVIVDQEAASKLTTSILAGTKPSGS.

The Proton acceptor; for enolization step role is filled by Asp-67. Asn-136 acts as the For ring-opening step in catalysis. His-138 acts as the Proton acceptor; for ring-opening step in catalysis. The active-site For ring-opening step is Glu-143.

The protein belongs to the glucosamine/galactosamine-6-phosphate isomerase family. NagB subfamily.

It carries out the reaction alpha-D-glucosamine 6-phosphate + H2O = beta-D-fructose 6-phosphate + NH4(+). The protein operates within amino-sugar metabolism; N-acetylneuraminate degradation; D-fructose 6-phosphate from N-acetylneuraminate: step 5/5. Its function is as follows. Catalyzes the reversible isomerization-deamination of glucosamine 6-phosphate (GlcN6P) to form fructose 6-phosphate (Fru6P) and ammonium ion. This chain is Glucosamine-6-phosphate deaminase, found in Brevibacillus brevis (strain 47 / JCM 6285 / NBRC 100599).